Here is a 99-residue protein sequence, read N- to C-terminus: Ubiquitin-related modifier 1 homolog (99 aa).

Gly99 carries the post-translational modification 1-thioglycine. Gly99 participates in a covalent cross-link: Glycyl lysine isopeptide (Gly-Lys) (interchain with K-? in acceptor proteins).

The protein belongs to the URM1 family. C-terminal thiocarboxylation occurs in 2 steps, it is first acyl-adenylated (-COAMP) via the hesA/moeB/thiF part of the MOCS3 homolog, then thiocarboxylated (-COSH) via the rhodanese domain of the MOCS3 homolog.

Its subcellular location is the cytoplasm. It functions in the pathway tRNA modification; 5-methoxycarbonylmethyl-2-thiouridine-tRNA biosynthesis. Its function is as follows. Acts as a sulfur carrier required for 2-thiolation of mcm(5)S(2)U at tRNA wobble positions of cytosolic tRNA(Lys), tRNA(Glu) and tRNA(Gln). Serves as sulfur donor in tRNA 2-thiolation reaction by being thiocarboxylated (-COSH) at its C-terminus by MOCS3. The sulfur is then transferred to tRNA to form 2-thiolation of mcm(5)S(2)U. Also acts as a ubiquitin-like protein (UBL) that is covalently conjugated via an isopeptide bond to lysine residues of target proteins. The thiocarboxylated form serves as substrate for conjugation and oxidative stress specifically induces the formation of UBL-protein conjugates. This chain is Ubiquitin-related modifier 1 homolog, found in Chlamydomonas reinhardtii (Chlamydomonas smithii).